Here is a 147-residue protein sequence, read N- to C-terminus: Sulfur acceptor protein CsdE (147 aa).

C61 serves as the catalytic Cysteine persulfide intermediate. At C61 the chain carries Cysteine persulfide.

It belongs to the SufE family. Homodimer. Forms a heterodimer with CsdA. Interacts with CsdA and with TcdA/CsdL.

Its function is as follows. Stimulates the cysteine desulfurase activity of CsdA. Contains a cysteine residue (Cys-61) that acts to accept sulfur liberated via the desulfurase activity of CsdA. May be able to transfer sulfur to TcdA/CsdL. Seems to support the function of TcdA in the generation of cyclic threonylcarbamoyladenosine at position 37 (ct(6)A37) in tRNAs that read codons beginning with adenine. Does not appear to participate in Fe/S biogenesis. This Escherichia coli (strain K12) protein is Sulfur acceptor protein CsdE (csdE).